Consider the following 283-residue polypeptide: 4-diphosphocytidyl-2-C-methyl-D-erythritol kinase (283 aa).

Lys-10 is a catalytic residue. 99–109 is a binding site for ATP; that stretch reads PMGGGLGGGSS. The active site involves Asp-141.

Belongs to the GHMP kinase family. IspE subfamily. As to quaternary structure, homodimer.

It carries out the reaction 4-CDP-2-C-methyl-D-erythritol + ATP = 4-CDP-2-C-methyl-D-erythritol 2-phosphate + ADP + H(+). It functions in the pathway isoprenoid biosynthesis; isopentenyl diphosphate biosynthesis via DXP pathway; isopentenyl diphosphate from 1-deoxy-D-xylulose 5-phosphate: step 3/6. Catalyzes the phosphorylation of the position 2 hydroxy group of 4-diphosphocytidyl-2C-methyl-D-erythritol. The sequence is that of 4-diphosphocytidyl-2-C-methyl-D-erythritol kinase from Salmonella enteritidis PT4 (strain P125109).